The chain runs to 273 residues: Hemin import ATP-binding protein HmuV (273 aa).

The ABC transporter domain maps to 2 to 256 (LTAHHLDVAR…AHIAQCYGFA (255 aa)). 34–41 (GRNGAGKS) lines the ATP pocket.

It belongs to the ABC transporter superfamily. Heme (hemin) importer (TC 3.A.1.14.5) family. As to quaternary structure, the complex is composed of two ATP-binding proteins (HmuV), two transmembrane proteins (HmuU) and a solute-binding protein (HmuT).

Its subcellular location is the cell inner membrane. Part of the ABC transporter complex HmuTUV involved in hemin import. Responsible for energy coupling to the transport system. This chain is Hemin import ATP-binding protein HmuV, found in Burkholderia lata (strain ATCC 17760 / DSM 23089 / LMG 22485 / NCIMB 9086 / R18194 / 383).